The chain runs to 381 residues: Homoserine O-succinyltransferase (381 aa).

Residues 45 to 360 (NAVLVCHALN…PHGHDAFLLD (316 aa)) form the AB hydrolase-1 domain. The Nucleophile role is filled by S151. Substrate is bound at residue R221. Active-site residues include D321 and H354. Residue D355 participates in substrate binding.

It belongs to the AB hydrolase superfamily. MetX family. As to quaternary structure, homodimer.

The protein localises to the cytoplasm. The catalysed reaction is L-homoserine + succinyl-CoA = O-succinyl-L-homoserine + CoA. It participates in amino-acid biosynthesis; L-methionine biosynthesis via de novo pathway; O-succinyl-L-homoserine from L-homoserine: step 1/1. Its function is as follows. Transfers a succinyl group from succinyl-CoA to L-homoserine, forming succinyl-L-homoserine. The polypeptide is Homoserine O-succinyltransferase (Paraburkholderia phymatum (strain DSM 17167 / CIP 108236 / LMG 21445 / STM815) (Burkholderia phymatum)).